The primary structure comprises 128 residues: Mu-like prophage FluMu protein gp35 (128 aa).

The disordered stretch occupies residues 53 to 87 (TETGSQEGGEGLSKEPAGSDEQKQLRADPPSTDLN).

This sequence to phage Mu protein gp35. As to quaternary structure, monomer.

This is Mu-like prophage FluMu protein gp35 from Haemophilus influenzae (strain ATCC 51907 / DSM 11121 / KW20 / Rd).